The chain runs to 242 residues: Probable derlin-1 homolog (242 aa).

Residues 1-18 lie on the Cytoplasmic side of the membrane; the sequence is MDGVKEWFNSIPPVSRYM. Residues 19-39 form a helical membrane-spanning segment; it reads FAIFLGIPVLAAMHLISFNYL. Over 40–98 the chain is Lumenal; sequence YLDFTFTFKHFHLWRLITAPCIISSLGPMFLFNLIFFYQYTTRLESLNYAGKSDDYLFC. The chain crosses the membrane as a helical span at residues 99–119; sequence IIFISICNIIFGLIFEYYFLG. Residues 120–140 are Cytoplasmic-facing; sequence TMTIMSLIYIYSRMNPTGTSN. Residues 141 to 161 form a helical membrane-spanning segment; the sequence is FYGFFSFKTIYLPWVFLVAHF. The Lumenal segment spans residues 162-167; sequence LQTGHP. The helical transmembrane segment at 168-188 threads the bilayer; sequence PYSDFLAIVSGHIFFYLTDIY. At 189–242 the chain is on the cytoplasmic side; it reads PRANGVPALIKTPKFITNIFNKGDRNPNNVRRDPRTGRPIQEGGYNWGQGHALG. Positions 214–224 are enriched in basic and acidic residues; that stretch reads NPNNVRRDPRT. Positions 214–242 are disordered; sequence NPNNVRRDPRTGRPIQEGGYNWGQGHALG. Positions 233–242 are enriched in gly residues; the sequence is YNWGQGHALG.

This sequence belongs to the derlin family.

The protein resides in the endoplasmic reticulum membrane. In terms of biological role, may be involved in the degradation process of specific misfolded endoplasmic reticulum (ER) luminal proteins. May also involved in endoplasmic reticulum stress-induced pre-emptive quality control, a mechanism that selectively attenuates the translocation of newly synthesized proteins into the endoplasmic reticulum and reroutes them to the cytosol for proteasomal degradation. The protein is Probable derlin-1 homolog of Dictyostelium discoideum (Social amoeba).